A 419-amino-acid polypeptide reads, in one-letter code: Histone acetyltransferase type B catalytic subunit (419 aa).

At A2 the chain carries N-acetylalanine. K9 and K15 each carry N6-acetyllysine. The tract at residues 62-64 is interaction with histone H4 N-terminus; that stretch reads DDE. S190 is modified (phosphoserine). The tract at residues 225-227 is interaction with histone H4 N-terminus; sequence YNY. Acetyl-CoA contacts are provided by residues 241 to 243 and 248 to 254; these read MLI and QGQGHGA. E276 acts as the Proton donor/acceptor in catalysis. S343 carries the post-translational modification Phosphoserine.

It belongs to the HAT1 family. Catalytic subunit of the type B histone acetyltransferase (HAT) complex, composed of RBBP7 and HAT1. Interacts with histones H4 and H2A. The interaction is dependent of the ability of RBBP7 to bind to the N-terminus of histones. Component of the histone H3.1 and H3.3 complexes. In terms of processing, phosphorylated by AMPK at Ser-190; phosphorylation increases HAT1 activity.

The protein resides in the nucleus matrix. It localises to the mitochondrion. It catalyses the reaction L-lysyl-[protein] + acetyl-CoA = N(6)-acetyl-L-lysyl-[protein] + CoA + H(+). Its function is as follows. Histone acetyltransferase that plays a role in different biological processes including cell cycle progression, glucose metabolism, histone production or DNA damage repair. Coordinates histone production and acetylation via H4 promoter binding. Acetylates histone H4 at 'Lys-5' (H4K5ac) and 'Lys-12' (H4K12ac) and, to a lesser extent, histone H2A at 'Lys-5' (H2AK5ac). Drives H4 production by chromatin binding to support chromatin replication and acetylation. Since transcription of H4 genes is tightly coupled to S-phase, plays an important role in S-phase entry and progression. Promotes homologous recombination in DNA repair by facilitating histone turnover and incorporation of acetylated H3.3 at sites of double-strand breaks. In addition, acetylates other substrates such as chromatin-related proteins. Also acetylates RSAD2 which mediates the interaction of ubiquitin ligase UBE4A with RSAD2 leading to RSAD2 ubiquitination and subsequent degradation. The chain is Histone acetyltransferase type B catalytic subunit (Hat1) from Rattus norvegicus (Rat).